The primary structure comprises 284 residues: 4-hydroxybenzoate octaprenyltransferase (284 aa).

The next 8 helical transmembrane spans lie at 18–38 (PIGTLLLLWPTLWALIIAAEG), 42–62 (WHVLLVFVLGVVLMRSAGCVI), 93–113 (IILFLLLGISSFLLVLTMNPL), 136–156 (HLPQLFLGLAFSWAIPMAWAA), 161–181 (LPWVVWFVFAINALWTIAYDT), 209–229 (LIIGLLQLLTLVMLVWLGLHY), 233–253 (QSFYWSVLAAGALFVYQQHLI), and 264–284 (AFLNNNYVGMVLALGLFVAFW).

Belongs to the UbiA prenyltransferase family. Requires Mg(2+) as cofactor.

The protein resides in the cell inner membrane. The catalysed reaction is all-trans-octaprenyl diphosphate + 4-hydroxybenzoate = 4-hydroxy-3-(all-trans-octaprenyl)benzoate + diphosphate. Its pathway is cofactor biosynthesis; ubiquinone biosynthesis. In terms of biological role, catalyzes the prenylation of para-hydroxybenzoate (PHB) with an all-trans polyprenyl group. Mediates the second step in the final reaction sequence of ubiquinone-8 (UQ-8) biosynthesis, which is the condensation of the polyisoprenoid side chain with PHB, generating the first membrane-bound Q intermediate 3-octaprenyl-4-hydroxybenzoate. This is 4-hydroxybenzoate octaprenyltransferase from Vibrio vulnificus (strain CMCP6).